We begin with the raw amino-acid sequence, 289 residues long: Elongation factor Ts (289 aa).

The segment at Thr-82–Val-85 is involved in Mg(2+) ion dislocation from EF-Tu.

This sequence belongs to the EF-Ts family.

It localises to the cytoplasm. Functionally, associates with the EF-Tu.GDP complex and induces the exchange of GDP to GTP. It remains bound to the aminoacyl-tRNA.EF-Tu.GTP complex up to the GTP hydrolysis stage on the ribosome. The protein is Elongation factor Ts of Chloroherpeton thalassium (strain ATCC 35110 / GB-78).